A 1010-amino-acid chain; its full sequence is Ubiquitin conjugation factor E4 (1010 aa).

The tract at residues 13–70 (AKLQQTNSEANSSKEPKESNIAPEPKKPDLKKRFIGSKATTSNSEQKEISPPVTSGAP) is disordered. A compositionally biased stretch (basic and acidic residues) spans 24-44 (SSKEPKESNIAPEPKKPDLKK). Positions 930-1004 (DIPDYFLDPL…NTFLKSKRNK (75 aa)) constitute a U-box domain.

This sequence belongs to the ubiquitin conjugation factor E4 family.

The protein localises to the cytoplasm. It localises to the nucleus. Its pathway is protein modification; protein ubiquitination. In terms of biological role, E4 ubiquitin chain-elongation enzyme specifically involved in polyubiquitin chain assembly. Binds to cdc48 and elongates mono- and diubiquitinated ERAD substrates presented by the ufd1-npl4-cdc48 (UNC) AAA ATPase complex to a chain length of 4 to 6 ubiquitin moieties. Delivers these polyubiquitinated substrates to downstream ERAD components, which target them to the proteasome. Enhances ubiquitination at 'Lys-48', but not at 'Lys-29' of the Ub moiety. The chain is Ubiquitin conjugation factor E4 (ufd2) from Schizosaccharomyces pombe (strain 972 / ATCC 24843) (Fission yeast).